Reading from the N-terminus, the 306-residue chain is Serine/threonine-protein phosphatase PP2A-1 catalytic subunit (306 aa).

Asp54, His56, Asp82, and Asn114 together coordinate Mn(2+). Catalysis depends on His115, which acts as the Proton donor. The Mn(2+) site is built by His164 and His238. At Leu306 the chain carries Leucine methyl ester.

This sequence belongs to the PPP phosphatase family. PP-2A subfamily. As to quaternary structure, PP2A consists of a common heterodimeric core enzyme, composed of a 36 kDa catalytic subunit (subunit C) and a 65 kDa constant regulatory subunit (subunit A), that associates with a variety of regulatory subunits such as subunits B (the R2/B/PR55/B55, R3/B''/PR72/PR130/PR59 and R5/B'/B56 families). Interacts with TAF12B. Interacts with SRK2E/OST1. Interacts with TAP46. Mn(2+) serves as cofactor. Reversibly methyl esterified on Leu-306 by leucine carboxyl methyltransferase 1 (LCMT1) and pectin methylesterase 1 (PME1). Carboxyl methylation influences the affinity of the catalytic subunit for the different regulatory subunits, thereby modulating the PP2A holoenzyme's substrate specificity, enzyme activity and cellular localization. Post-translationally, phosphorylation of either threonine (by autophosphorylation-activated protein kinase) or tyrosine results in inactivation of the phosphatase. Auto-dephosphorylation has been suggested as a mechanism for reactivation.

The protein localises to the cytoplasm. It carries out the reaction O-phospho-L-seryl-[protein] + H2O = L-seryl-[protein] + phosphate. The catalysed reaction is O-phospho-L-threonyl-[protein] + H2O = L-threonyl-[protein] + phosphate. The sequence is that of Serine/threonine-protein phosphatase PP2A-1 catalytic subunit from Arabidopsis thaliana (Mouse-ear cress).